Here is a 147-residue protein sequence, read N- to C-terminus: Large ribosomal subunit protein bL21 (147 aa).

Residues 125-147 (EEVEAAPKAKKAAPKAKKEATKE) form a disordered region.

The protein belongs to the bacterial ribosomal protein bL21 family. Part of the 50S ribosomal subunit. Contacts protein L20.

This protein binds to 23S rRNA in the presence of protein L20. The chain is Large ribosomal subunit protein bL21 from Flavobacterium johnsoniae (strain ATCC 17061 / DSM 2064 / JCM 8514 / BCRC 14874 / CCUG 350202 / NBRC 14942 / NCIMB 11054 / UW101) (Cytophaga johnsonae).